A 218-amino-acid chain; its full sequence is Hypoxanthine-guanine phosphoribosyltransferase (218 aa).

A2 bears the N-acetylalanine mark. K69 contacts GMP. K103 bears the N6-acetyllysine mark. A Glycyl lysine isopeptide (Lys-Gly) (interchain with G-Cter in SUMO1); alternate cross-link involves residue K115. A Glycyl lysine isopeptide (Lys-Gly) (interchain with G-Cter in SUMO2); alternate cross-link involves residue K115. Residues 134–142 (EDIIDTGKT), K166, 186–188 (KFV), and D194 contribute to the GMP site. The active-site Proton acceptor is the D138. Position 142 is a phosphothreonine (T142). Residue D194 participates in Mg(2+) binding.

Belongs to the purine/pyrimidine phosphoribosyltransferase family. Homotetramer. The cofactor is Mg(2+).

The protein localises to the cytoplasm. The enzyme catalyses IMP + diphosphate = hypoxanthine + 5-phospho-alpha-D-ribose 1-diphosphate. The catalysed reaction is GMP + diphosphate = guanine + 5-phospho-alpha-D-ribose 1-diphosphate. It participates in purine metabolism; IMP biosynthesis via salvage pathway; IMP from hypoxanthine: step 1/1. Functionally, converts guanine to guanosine monophosphate, and hypoxanthine to inosine monophosphate. Transfers the 5-phosphoribosyl group from 5-phosphoribosylpyrophosphate onto the purine. Plays a central role in the generation of purine nucleotides through the purine salvage pathway. This chain is Hypoxanthine-guanine phosphoribosyltransferase (HPRT1), found in Sus scrofa (Pig).